A 186-amino-acid chain; its full sequence is Superoxide dismutase [Cu-Zn] (186 aa).

An N-terminal signal peptide occupies residues 1–22; the sequence is MNMKTLLALAVSAVCSVSVAQA. Positions 79, 81, and 104 each coordinate Cu cation. Cysteine 86 and cysteine 182 are disulfide-bonded. Zn(2+) contacts are provided by histidine 104, histidine 113, histidine 122, and aspartate 125. Histidine 160 lines the Cu cation pocket.

The protein belongs to the Cu-Zn superoxide dismutase family. In terms of assembly, homodimer. Cu cation is required as a cofactor. It depends on Zn(2+) as a cofactor.

The protein localises to the periplasm. The enzyme catalyses 2 superoxide + 2 H(+) = H2O2 + O2. Functionally, destroys radicals which are normally produced within the cells and which are toxic to biological systems. This Neisseria meningitidis serogroup A / serotype 4A (strain DSM 15465 / Z2491) protein is Superoxide dismutase [Cu-Zn] (sodC).